A 147-amino-acid polypeptide reads, in one-letter code: Ribonuclease P protein component (147 aa).

The tract at residues threonine 117–glutamine 147 is disordered.

The protein belongs to the RnpA family. As to quaternary structure, consists of a catalytic RNA component (M1 or rnpB) and a protein subunit.

The catalysed reaction is Endonucleolytic cleavage of RNA, removing 5'-extranucleotides from tRNA precursor.. In terms of biological role, RNaseP catalyzes the removal of the 5'-leader sequence from pre-tRNA to produce the mature 5'-terminus. It can also cleave other RNA substrates such as 4.5S RNA. The protein component plays an auxiliary but essential role in vivo by binding to the 5'-leader sequence and broadening the substrate specificity of the ribozyme. The chain is Ribonuclease P protein component from Thermobifida fusca (strain YX).